Here is a 295-residue protein sequence, read N- to C-terminus: Ankyrin repeat and SOCS box protein 17 (295 aa).

One copy of the ANK repeat lies at 146–176 (SGITPLLYVAQTRQSNILKILLQYGILEREN). The region spanning 232 to 295 (LGRRPIISNW…CLQNYLNLES (64 aa)) is the SOCS box domain.

Belongs to the ankyrin SOCS box (ASB) family.

Its pathway is protein modification; protein ubiquitination. Its function is as follows. May be a substrate-recognition component of a SCF-like ECS (Elongin-Cullin-SOCS-box protein) E3 ubiquitin-protein ligase complex which mediates the ubiquitination and subsequent proteasomal degradation of target proteins. This is Ankyrin repeat and SOCS box protein 17 (ASB17) from Bos taurus (Bovine).